The chain runs to 441 residues: MIGGLFVYNHKGEVLISRIYRDDVTRNAVDAFRVNVIHARQQVRSPVTNMARTSFFHVKRGNVWICAVTRQNVNAAMVFEFLKRFADTMQSYFGKLNEENVKNNFVLIYELLDEILDFGYPQNTDPGVLKTFITQQGVRTADAPVPVTKEEQSQITSQVTGQIGWRREGIKYRRNELFLDVIEYVNLLMNQQGQVLSAHVAGKVAMKSYLSGMPECKFGINDKITIEGKSKPGSDDPNKASRAAVAIDDCQFHQCVKLTKFETEHAISFIPPDGEYELMRYRTTKDIQLPFRVIPLVREVSRNKMEVKVVVKSNFKPSLLAQKLEVRIPTPPNTSGVQLICMKGKAKYKAGENAIVWKIKRMAGMKESQISAEIDLLSTGNVEKKKWNRPPVSMNFEVPFAPSGLKVRYLKVFEPKLNYSDHDVIKWVRYIGRSGLYETRC.

Residues 174–440 form the MHD domain; sequence RNELFLDVIE…IGRSGLYETR (267 aa).

The protein belongs to the adapter complexes medium subunit family. Adapter protein complex 2 (AP-2) is a heterotetramer composed of two large adaptins (alpha-type subunit and beta-type subunits), a medium adaptin (mu-type subunit AP50) and a small adaptin (sigma-type subunit AP17). Brain, heart, lung, liver, testis and spleen.

It localises to the cell membrane. It is found in the membrane. Its subcellular location is the coated pit. Its function is as follows. Component of the adapter complexes which link clathrin to receptors in coated vesicles. Clathrin-associated protein complexes are believed to interact with the cytoplasmic tails of membrane proteins, leading to their selection and concentration. AP50 is a subunit of the plasma membrane adapter. Essential wnt/egl-20 signaling protein that functions in wnt/egl-20-producing cells. Required for the AP-2 complex-mediated endocytosis of membrane proteins including wntless homolog mig-14 in egl-20-producing cells. During development, regulates the migration of HSN neurons and the left and right Q neuroblasts (QL and QR, respectively) and their descendants, possibly through hox gene and wnt/egl-20 gene target mab-5, and plays a role in establishing ALM and PLM neuronal cell polarity. Regulates AWB sensory neuron cilia membrane expansion during development, potentially via localization of tub-1 and PtdIns(4,5)P2 to the ciliary base. Required for the asymmetric divisions of V5 cells. The protein is AP-2 complex subunit mu (dpy-23) of Caenorhabditis elegans.